The primary structure comprises 3535 residues: Lysosomal-trafficking regulator (3535 aa).

Residues 412-436 are disordered; that stretch reads MESSASTAMPKQQQHPRHKRQRSSQ. A WD 1 repeat occupies 689-736; the sequence is TLSRRLIQLQLNSSDRASQLFQALLYKCSKHSRAKFWLDESSTPAKLE. The segment covering 1066–1096 has biased composition (polar residues); the sequence is STHQEPTGVVNSPSGDSQQPRPRARSFNSGS. Disordered stretches follow at residues 1066 to 1132 and 1592 to 1613; these read STHQ…NAGV and GEGQ…TLDG. Residues 1596–1610 are compositionally biased toward low complexity; it reads PTGRSPGSSSSSRST. The BEACH-type PH domain occupies 2686–2784; it reads SLNSQILYNF…MREVFCDKIV (99 aa). Positions 2784–3081 constitute a BEACH domain; that stretch reads VATPDQSKVI…QLFKSPHPAS (298 aa). The tract at residues 3254 to 3287 is disordered; it reads GIGGGGSERVDEAGNLHPTSSASSVNSSSISSGG. Residues 3273-3285 are compositionally biased toward low complexity; sequence SSASSVNSSSISS. WD repeat units follow at residues 3307–3346, 3442–3486, and 3489–3527; these read RHTD…YVRT, VHED…FVSE, and TGTS…GNAP.

Interacts with Rab5; the interaction is independent of GDP or GTP. Interacts with msps.

The protein resides in the vesicle. Its subcellular location is the cytoplasm. The protein localises to the cytoskeleton. It is found in the spindle. It localises to the spindle pole. In terms of biological role, adapter protein that regulates intracellular membrane fusion reactions. Regulates the fusion of lysosome-related organelles. Promotes microtubules nucleation and centrosomal recruitment of microtubule nucleating proteins such as msps. In syncytial embryos, during the formation of yolk granules, suppresses vesicle fusion events with lipid droplets, possibly via interaction with Rab5. In the eye, regulates pigment granules size. In hemocytes, required for the late steps of bacteria phagocytosis. In fat body, required for autophagosome maturation. The chain is Lysosomal-trafficking regulator from Drosophila melanogaster (Fruit fly).